Here is a 470-residue protein sequence, read N- to C-terminus: Neuraminidase (470 aa).

Residues 1–6 (MNPNQK) lie on the Intravirion side of the membrane. The helical transmembrane segment at 7–27 (IITIGSISIAIGIISLMLQIG) threads the bilayer. Residues 11-33 (GSISIAIGIISLMLQIGNIISMW) form an involved in apical transport and lipid raft association region. The Virion surface portion of the chain corresponds to 28-470 (NIISMWASHS…GAELPFTIDK (443 aa)). The tract at residues 36-90 (HSIQTGSQNHTGICNQRIITYENSTWVNHTYVNINNTNVVTGKDKTSVTLAGNSS) is hypervariable stalk region. N-linked (GlcNAc...) asparagine; by host glycans are attached at residues N44, N58, N63, N70, and N88. A head of neuraminidase region spans residues 91–470 (LCSISGWAIY…GAELPFTIDK (380 aa)). Disulfide bonds link C92-C417, C124-C129, C184-C231, C233-C238, C279-C292, C281-C290, C318-C335, and C421-C447. A substrate-binding site is contributed by R118. A glycan (N-linked (GlcNAc...) asparagine; by host) is linked at N146. Catalysis depends on D151, which acts as the Proton donor/acceptor. R152 is a binding site for substrate. The N-linked (GlcNAc...) asparagine; by host glycan is linked to N235. 277–278 (EE) provides a ligand contact to substrate. Substrate is bound at residue R293. The Ca(2+) site is built by D294, G298, and D324. R368 serves as a coordination point for substrate. Y402 acts as the Nucleophile in catalysis. Residues N434 and N455 are each glycosylated (N-linked (GlcNAc...) asparagine; by host).

It belongs to the glycosyl hydrolase 34 family. Homotetramer. Ca(2+) is required as a cofactor. In terms of processing, N-glycosylated.

It localises to the virion membrane. It is found in the host apical cell membrane. It carries out the reaction Hydrolysis of alpha-(2-&gt;3)-, alpha-(2-&gt;6)-, alpha-(2-&gt;8)- glycosidic linkages of terminal sialic acid residues in oligosaccharides, glycoproteins, glycolipids, colominic acid and synthetic substrates.. Inhibited by the neuraminidase inhibitors zanamivir (Relenza) and oseltamivir (Tamiflu). These drugs interfere with the release of progeny virus from infected cells and are effective against all influenza strains. Resistance to neuraminidase inhibitors is quite rare. Its function is as follows. Catalyzes the removal of terminal sialic acid residues from viral and cellular glycoconjugates. Cleaves off the terminal sialic acids on the glycosylated HA during virus budding to facilitate virus release. Additionally helps virus spread through the circulation by further removing sialic acids from the cell surface. These cleavages prevent self-aggregation and ensure the efficient spread of the progeny virus from cell to cell. Otherwise, infection would be limited to one round of replication. Described as a receptor-destroying enzyme because it cleaves a terminal sialic acid from the cellular receptors. May facilitate viral invasion of the upper airways by cleaving the sialic acid moieties on the mucin of the airway epithelial cells. Likely to plays a role in the budding process through its association with lipid rafts during intracellular transport. May additionally display a raft-association independent effect on budding. Plays a role in the determination of host range restriction on replication and virulence. Sialidase activity in late endosome/lysosome traffic seems to enhance virus replication. The polypeptide is Neuraminidase (Aves (Human)).